The sequence spans 510 residues: NAD(P)H-quinone oxidoreductase subunit 2, chloroplastic (510 aa).

The next 12 helical transmembrane spans lie at 24 to 44, 59 to 79, 99 to 119, 124 to 144, 149 to 169, 183 to 203, 229 to 249, 295 to 315, 323 to 343, 347 to 367, 395 to 415, and 418 to 438; these read LLLFHGSFIFPECILIFGLIL, WFYFISSTSLVMSITALLFRW, IFQFLILLCSTLCIPLSVEYI, MAITEFLLFVLTATLGGMFLC, FITIFVAPECFSLCSYLLSGY, YLLMGGASSSILVHGFSWLYG, ISIALISITVGIGFKLSPAPF, WHLLLEILAILSMILGNLIAI, MLAYSSIGQIGYVIIGIIVGD, GYASMITYMLFYISMNLGTFA, ALSLALCLLSLGGLPPLAGFF, and LHLFWCGWQAGLYFLVSIGLL.

This sequence belongs to the complex I subunit 2 family. NDH is composed of at least 16 different subunits, 5 of which are encoded in the nucleus.

The protein resides in the plastid. The protein localises to the chloroplast thylakoid membrane. The enzyme catalyses a plastoquinone + NADH + (n+1) H(+)(in) = a plastoquinol + NAD(+) + n H(+)(out). It catalyses the reaction a plastoquinone + NADPH + (n+1) H(+)(in) = a plastoquinol + NADP(+) + n H(+)(out). Its function is as follows. NDH shuttles electrons from NAD(P)H:plastoquinone, via FMN and iron-sulfur (Fe-S) centers, to quinones in the photosynthetic chain and possibly in a chloroplast respiratory chain. The immediate electron acceptor for the enzyme in this species is believed to be plastoquinone. Couples the redox reaction to proton translocation, and thus conserves the redox energy in a proton gradient. The polypeptide is NAD(P)H-quinone oxidoreductase subunit 2, chloroplastic (Phormium tenax (New Zealand flax)).